The chain runs to 388 residues: Na(+)/H(+) antiporter NhaA (388 aa).

Transmembrane regions (helical) follow at residues 8–28 (FFSAASGGAIILLLSALLGLL), 57–77 (LAEFISIAPMSLFFFVVIAEI), 93–113 (ILPLISALGGMMIPACLYGLI), 123–143 (GWAIPIATDAAFTLPIILALG), 152–172 (VWLMALAIFDDLLGIVVIALF), 175–195 (SHLNGYALFAAGLITAVMIGL), 210–230 (GVVLWWALLVSGLHPTIAGVI), 254–274 (IIAPWVTWLILPLFGFVSMGM), 278–298 (AMSFHVLLAPVPLGVALGLFL), 328–348 (LFGLSLLCGIGFTISLFIAEL), and 361–381 (YGILMGSLLSALAGWLWLRFL).

Belongs to the NhaA Na(+)/H(+) (TC 2.A.33) antiporter family.

Its subcellular location is the cell inner membrane. The enzyme catalyses Na(+)(in) + 2 H(+)(out) = Na(+)(out) + 2 H(+)(in). In terms of biological role, na(+)/H(+) antiporter that extrudes sodium in exchange for external protons. In Zymomonas mobilis subsp. mobilis (strain ATCC 31821 / ZM4 / CP4), this protein is Na(+)/H(+) antiporter NhaA.